The following is a 362-amino-acid chain: Probable choline-phosphate cytidylyltransferase (362 aa).

The span at 1 to 37 (MGEEGIKINDTHKRRIDEVEPSEKEDNVERQTKKYNF) shows a compositional bias: basic and acidic residues. Residues 1-79 (MGEEGIKIND…VSPVEEEPRD (79 aa)) form a disordered region. CTP is bound by residues 109–117 (VFDLFHIGH) and Lys-147. Positions 147 and 176 each coordinate substrate. CTP-binding positions include 193–194 (HD), Tyr-198, and 221–225 (RTEGV). Residues 308-362 (KNPLHGSSEPSSPGPTGFLGGINRWMQRRSSSHYDLPRVGNEIAASSSSATEENH) are disordered. 2 stretches are compositionally biased toward low complexity: residues 313–323 (GSSEPSSPGPT) and 351–362 (AASSSSATEENH). Phosphoserine is present on residues Ser-315 and Ser-319. Thr-323 carries the post-translational modification Phosphothreonine. Residue Ser-355 is modified to Phosphoserine.

Belongs to the cytidylyltransferase family.

Its subcellular location is the nucleus. The enzyme catalyses phosphocholine + CTP + H(+) = CDP-choline + diphosphate. The polypeptide is Probable choline-phosphate cytidylyltransferase (Schizosaccharomyces pombe (strain 972 / ATCC 24843) (Fission yeast)).